We begin with the raw amino-acid sequence, 314 residues long: Nitrilase 2 (314 aa).

Residues 7-269 (VTLGVAQAAP…ETLITARVST (263 aa)) form the CN hydrolase domain. Catalysis depends on E47, which acts as the Proton acceptor. The active-site Proton donor is K132. C166 functions as the Nucleophile in the catalytic mechanism.

This sequence belongs to the carbon-nitrogen hydrolase superfamily. Nitrilase family.

The catalysed reaction is a nitrile + 2 H2O = a carboxylate + NH4(+). In terms of biological role, nitrilases catalyze the mild hydrolytic conversion of organonitriles directly to the corresponding carboxylic acids. Catalyzes the production of aryllactic acid derivatives. Mediates the hydrolysis of cyanohydrin to (S)-phenyllactic acid. The polypeptide is Nitrilase 2 (Unknown prokaryotic organism).